Reading from the N-terminus, the 198-residue chain is Protein GrpE (198 aa).

Positions 1 to 56 (MVEKKKSQAEKNNQSATEEEIEKAVKGSKRDSNAADEKNSASAAASSSAVSDAEPA) are disordered. Basic and acidic residues predominate over residues 22–39 (EKAVKGSKRDSNAADEKN). The segment covering 40–56 (SASAAASSSAVSDAEPA) has biased composition (low complexity).

It belongs to the GrpE family. Homodimer.

Its subcellular location is the cytoplasm. Participates actively in the response to hyperosmotic and heat shock by preventing the aggregation of stress-denatured proteins, in association with DnaK and GrpE. It is the nucleotide exchange factor for DnaK and may function as a thermosensor. Unfolded proteins bind initially to DnaJ; upon interaction with the DnaJ-bound protein, DnaK hydrolyzes its bound ATP, resulting in the formation of a stable complex. GrpE releases ADP from DnaK; ATP binding to DnaK triggers the release of the substrate protein, thus completing the reaction cycle. Several rounds of ATP-dependent interactions between DnaJ, DnaK and GrpE are required for fully efficient folding. This chain is Protein GrpE, found in Oenococcus oeni (strain ATCC BAA-331 / PSU-1).